A 226-amino-acid polypeptide reads, in one-letter code: PKHD-type hydroxylase MADE_1018490 (226 aa).

The region spanning 77 to 177 (RIFPPCFNRY…RIAAITWIQS (101 aa)) is the Fe2OG dioxygenase domain. 3 residues coordinate Fe cation: H95, D97, and H158. R168 lines the 2-oxoglutarate pocket.

It depends on Fe(2+) as a cofactor. L-ascorbate serves as cofactor.

The protein is PKHD-type hydroxylase MADE_1018490 of Alteromonas mediterranea (strain DSM 17117 / CIP 110805 / LMG 28347 / Deep ecotype).